We begin with the raw amino-acid sequence, 2489 residues long: Protein YPR117W (2489 aa).

The next 2 membrane-spanning stretches (helical) occupy residues 19–39 (FMLF…WILM) and 128–148 (VLSI…LALT). N-linked (GlcNAc...) asparagine glycans are attached at residues Asn-191, Asn-210, Asn-311, Asn-452, Asn-468, Asn-605, Asn-638, Asn-663, Asn-698, Asn-789, Asn-835, Asn-981, Asn-1255, Asn-1404, and Asn-1476. Residues 1610 to 1676 (LTQEKLATER…RLHTVNTILS (67 aa)) are a coiled coil. The disordered stretch occupies residues 1685 to 1704 (PGGNTDGDSSSSLSDTDVNL). The span at 1690-1704 (DGDSSSSLSDTDVNL) shows a compositional bias: low complexity. N-linked (GlcNAc...) asparagine glycosylation is found at Asn-1978 and Asn-2189. A phosphoserine mark is found at Ser-2254 and Ser-2278. N-linked (GlcNAc...) asparagine glycosylation occurs at Asn-2279. Residues 2451–2471 (SSTHSSDIRSINSDETYNEND) are compositionally biased toward polar residues. Residues 2451–2489 (SSTHSSDIRSINSDETYNENDGNGVKPFYPVTSEFSKNK) are disordered.

Its subcellular location is the cell membrane. The protein resides in the endoplasmic reticulum membrane. It localises to the mitochondrion membrane. Functionally, tube-forming lipid transport protein which may bind to phosphatidylinositols and may affect phosphatidylinositol-4,5-bisphosphate (PtdIns-4,5-P2) distribution. The protein is Protein YPR117W of Saccharomyces cerevisiae (strain ATCC 204508 / S288c) (Baker's yeast).